The chain runs to 377 residues: Protein ECM9 (377 aa).

Its function is as follows. May be involved in cell wall organization and biogenesis. This chain is Protein ECM9 (ECM9), found in Saccharomyces cerevisiae (strain ATCC 204508 / S288c) (Baker's yeast).